The chain runs to 207 residues: Transcription factor bHLH149 (207 aa).

The disordered stretch occupies residues 1–25 (MVESLFPSIENTGESSRRKKPRISE). A bHLH domain is found at 132–181 (KSRKGLTETNRIKLPAVERKLKILGRLVPGCRKVSVPNLLDEATDYIAAL).

Homodimer. Interacts with PRE3.

Its subcellular location is the nucleus. Atypical bHLH transcription factor probably unable to bind DNA. Negatively regulates brassinosteroid signaling. This chain is Transcription factor bHLH149 (BHLH149), found in Arabidopsis thaliana (Mouse-ear cress).